A 517-amino-acid polypeptide reads, in one-letter code: MDIIGGQHLRQMWDDLADVYGHKTALICESSSGVVNRYSYLELNQEINRTANLFYTLGIRKGDKVALHLDNCPEFIFCWFGLAKIGAIMVPINARLLREESTWILQNSQACLLVTSAQFYPMYQQIQQEDATQLRHICLTDVSLPADDGVSSFTQLKNQQPATLCYAPPLSTDDTAEILFTSGTTSRPKGVVITHYNLRFAGYYSAWQCALRDDDVYLTVMPAFHIDCQCTAAMAAFSTGATFVLVEKYSARAFWGQVQKYRATITECIPMMIRTLMVQPLSANDQQHRLREVMFYLNLSEQEKDAFCERFGVRLLTSYGMTETIVGIIGDRPGDKRRWPSIGQAGFCYEAEIRDDHNRPLPAGEIGEICIKGVPGKTIFKEYFLNPKATAKVLEADGWLHTGDTGYRDEEGFFYFVDRRCNMIKRGGENVSCVELENIIATHPKIQDIVVVGIKDSIRDEAIKAFVVLNEGETLSEEEFFCFCEQNMAKFKVLSYLEIRKDLPRNCSGKIIRKNLK.

This sequence belongs to the ATP-dependent AMP-binding enzyme family.

The enzyme catalyses 4-(trimethylamino)butanoate + ATP + CoA = 4-(trimethylamino)butanoyl-CoA + AMP + diphosphate. The catalysed reaction is crotonobetaine + ATP + CoA = crotonobetainyl-CoA + AMP + diphosphate. It catalyses the reaction (R)-carnitine + ATP + CoA = (R)-carnitinyl-CoA + AMP + diphosphate. Its pathway is amine and polyamine metabolism; carnitine metabolism. Catalyzes the transfer of CoA to carnitine, generating the initial carnitinyl-CoA needed for the CaiB reaction cycle. Also has activity toward crotonobetaine and gamma-butyrobetaine. This Escherichia coli O127:H6 (strain E2348/69 / EPEC) protein is Crotonobetaine/carnitine--CoA ligase.